The sequence spans 101 residues: Protein translation factor SUI1 homolog (101 aa).

The protein belongs to the SUI1 family.

The chain is Protein translation factor SUI1 homolog from Methanosphaera stadtmanae (strain ATCC 43021 / DSM 3091 / JCM 11832 / MCB-3).